The primary structure comprises 246 residues: Carbonic anhydrase (246 aa).

An N-terminal signal peptide occupies residues 1–22; sequence MKTSLGKAALLALSMMPVTVFA. Positions 23–246 constitute an Alpha-carbonic anhydrase domain; it reads SHWSYEGEGS…QPLNGRVVIE (224 aa). A disulfide bridge links Cys-46 with Cys-201. The Proton acceptor role is filled by His-84. Zn(2+) contacts are provided by His-111, His-113, and His-130. Residue 197-198 participates in substrate binding; that stretch reads TT.

This sequence belongs to the alpha-carbonic anhydrase family. Zn(2+) is required as a cofactor.

Its subcellular location is the periplasm. It carries out the reaction hydrogencarbonate + H(+) = CO2 + H2O. Its function is as follows. Reversible hydration of carbon dioxide. This chain is Carbonic anhydrase (cah), found in Klebsiella pneumoniae.